The sequence spans 1571 residues: Phospholipid-transporting ATPase DNF1 (1571 aa).

Residues 1 to 94 (MSGTFHGDGH…TPKLNNGSGT (94 aa)) are disordered. Residues 1–214 (MSGTFHGDGH…TFLPKNILFQ (214 aa)) are Cytoplasmic-facing. Residues 29–40 (EDTHIAPTHFDD) show a composition bias toward basic and acidic residues. The segment covering 42-56 (ATSNKYSRPQVSFND) has biased composition (polar residues). Residue Ser-53 is modified to Phosphoserine. The span at 66–76 (AEEFTFNDDTE) shows a compositional bias: acidic residues. A Phosphothreonine modification is found at Thr-70. The segment covering 80–93 (HSFQPTPKLNNGSG) has biased composition (polar residues). Ser-81 bears the Phosphoserine mark. Thr-85 carries the post-translational modification Phosphothreonine. Ser-92 bears the Phosphoserine mark. A Phosphothreonine modification is found at Thr-94. A Phosphoserine modification is found at Ser-104. At Thr-109 the chain carries Phosphothreonine. A helical membrane pass occupies residues 215–235 (FHNFANVYFLVLIILGAFQIF). Positions 234–241 (IFGVTNPG) are involved in phosphatidylcholine substrate selection. Over 236–239 (GVTN) the chain is Extracellular. A helical membrane pass occupies residues 240-260 (PGLSAVPLVVIVIITAIKDAI). At 261–553 (EDSRRTVLDL…RISRELNFSV (293 aa)) the chain is on the cytoplasmic side. 4 positions are modified to phosphoserine: Ser-351, Ser-354, Ser-358, and Ser-365. Tyr-368 carries the post-translational modification Phosphotyrosine. A helical transmembrane segment spans residues 554–574 (VINFVLLFILCFVSGIANGVY). Residues 575 to 594 (YDKKGRSRFSYEFGTIAGSA) lie on the Extracellular side of the membrane. Positions 586–590 (EFGTI) are involved in phosphatidylcholine substrate selection. Residues 595–615 (ATNGFVSFWVAVILYQSLVPI) traverse the membrane as a helical segment. At 616 to 1188 (SLYISVEIIK…WSYKRLAEMI (573 aa)) the chain is on the cytoplasmic side. The active-site 4-aspartylphosphate intermediate is Asp-667. The ATP site is built by Asp-667, Lys-668, Thr-669, Glu-801, Phe-842, Ser-844, Lys-847, and Lys-871. Position 667 (Asp-667) interacts with Mg(2+). Position 669 (Thr-669) interacts with Mg(2+). Lys-895 is covalently cross-linked (Glycyl lysine isopeptide (Lys-Gly) (interchain with G-Cter in ubiquitin)). 7 residues coordinate ATP: Arg-909, Thr-910, Thr-989, Gly-990, Asp-991, Arg-1104, and Lys-1110. Asp-1130 is a Mg(2+) binding site. Residues Asn-1133 and Asp-1134 each coordinate ATP. Position 1134 (Asp-1134) interacts with Mg(2+). Residues 1189–1209 (PEFFYKNMIFALALFWYGIYN) form a helical membrane-spanning segment. Residues 1210-1219 (DFDGSYLYEY) are Extracellular-facing. A helical transmembrane segment spans residues 1220–1240 (TYMMFYNLAFTSLPVIFLGIL). Topologically, residues 1241-1270 (DQDVNDTISLVVPQLYRVGILRKEWNQRKF) are cytoplasmic. The helical transmembrane segment at 1271–1291 (LWYMLDGLYQSIICFFFPYLV) threads the bilayer. At 1292 to 1307 (YHKNMIVTSNGLGLDH) the chain is on the extracellular side. The chain crosses the membrane as a helical span at residues 1308-1328 (RYFVGVYVTTIAVISCNTYVL). Residues 1329-1334 (LHQYRW) are Cytoplasmic-facing. A helical membrane pass occupies residues 1335–1355 (DWFSGLFIALSCLVVFAWTGI). At 1356-1375 (WSSAIASREFFKAAARIYGA) the chain is on the extracellular side. Residues 1376 to 1396 (PSFWAVFFVAVLFCLLPRFTY) form a helical membrane-spanning segment. Arg-1393 serves as a coordination point for a 1,2-diacyl-sn-glycero-3-phospho-L-serine. Residues 1397-1571 (DSFQKFFYPT…ASLIGTQQNN (175 aa)) lie on the Cytoplasmic side of the membrane. Ser-1506 carries the phosphoserine modification. Thr-1551 is subject to Phosphothreonine. Residues Ser-1552 and Ser-1563 each carry the phosphoserine modification.

Belongs to the cation transport ATPase (P-type) (TC 3.A.3) family. Type IV subfamily. As to quaternary structure, component of a flippase complex consisting of DNF1 and LEM3. Interacts with LEM3; the interaction is direct and required for their mutual export from the endoplasmic reticulum. Mg(2+) serves as cofactor. Phosphorylated by FPK1 and KIN82.

The protein localises to the cell membrane. The protein resides in the endosome membrane. It is found in the golgi apparatus. It localises to the trans-Golgi network membrane. Its subcellular location is the cell septum. The protein localises to the bud. The enzyme catalyses ATP + H2O + phospholipidSide 1 = ADP + phosphate + phospholipidSide 2.. It carries out the reaction a 1,2-diacyl-sn-glycero-3-phosphoethanolamine(out) + ATP + H2O = a 1,2-diacyl-sn-glycero-3-phosphoethanolamine(in) + ADP + phosphate + H(+). It catalyses the reaction a 1,2-diacyl-sn-glycero-3-phosphocholine(out) + ATP + H2O = a 1,2-diacyl-sn-glycero-3-phosphocholine(in) + ADP + phosphate + H(+). The catalysed reaction is a beta-D-glucosyl-(1&lt;-&gt;1')-N-acylsphing-4-enine(out) + ATP + H2O = a beta-D-glucosyl-(1&lt;-&gt;1')-N-acylsphing-4-enine(in) + ADP + phosphate + H(+). The enzyme catalyses a 1,2-diacyl-sn-glycero-3-phospho-L-serine(out) + ATP + H2O = a 1,2-diacyl-sn-glycero-3-phospho-L-serine(in) + ADP + phosphate + H(+). Functionally, catalytic component of a P4-ATPase flippase complex which catalyzes the hydrolysis of ATP coupled to the transport of glucosylceramide, phosphatidylcholine, phosphatidylethanolamine, and small amounts of phosphatidylserine from the lumenal to the cytosolic leaflet of the cell membrane and ensures the maintenance of asymmetric distribution of phospholipids. Does not appear to transport sphingomyelin, inositol phosphoceramide, or phosphatidic acid. Required for efficient endocytosis. This chain is Phospholipid-transporting ATPase DNF1, found in Saccharomyces cerevisiae (strain ATCC 204508 / S288c) (Baker's yeast).